Here is a 395-residue protein sequence, read N- to C-terminus: Enolase (395 aa).

Substrate-binding residues include H136 and E145. Residue E188 is the Proton donor of the active site. Mg(2+)-binding residues include D223, E271, and D296. E271 and D296 together coordinate substrate. The active-site Proton acceptor is K321. Substrate contacts are provided by residues 348–351 (SHRS) and K372.

The protein belongs to the enolase family. As to quaternary structure, homodimer. The cofactor is Mg(2+).

It is found in the cytoplasm. The enzyme catalyses (2R)-2-phosphoglycerate = phosphoenolpyruvate + H2O. It functions in the pathway carbohydrate degradation; glycolysis; pyruvate from D-glyceraldehyde 3-phosphate: step 4/5. This chain is Enolase, found in Alligator mississippiensis (American alligator).